A 157-amino-acid polypeptide reads, in one-letter code: Small ribosomal subunit protein uS7 (157 aa).

Belongs to the universal ribosomal protein uS7 family. As to quaternary structure, part of the 30S ribosomal subunit. Contacts proteins S9 and S11.

Its function is as follows. One of the primary rRNA binding proteins, it binds directly to 16S rRNA where it nucleates assembly of the head domain of the 30S subunit. Is located at the subunit interface close to the decoding center, probably blocks exit of the E-site tRNA. This is Small ribosomal subunit protein uS7 from Borreliella afzelii (strain PKo) (Borrelia afzelii).